Here is a 728-residue protein sequence, read N- to C-terminus: 1,4-alpha-glucan branching enzyme GlgB (728 aa).

Aspartate 405 acts as the Nucleophile in catalysis. The active-site Proton donor is glutamate 458.

Belongs to the glycosyl hydrolase 13 family. GlgB subfamily. In terms of assembly, monomer.

It catalyses the reaction Transfers a segment of a (1-&gt;4)-alpha-D-glucan chain to a primary hydroxy group in a similar glucan chain.. The protein operates within glycan biosynthesis; glycogen biosynthesis. Its function is as follows. Catalyzes the formation of the alpha-1,6-glucosidic linkages in glycogen by scission of a 1,4-alpha-linked oligosaccharide from growing alpha-1,4-glucan chains and the subsequent attachment of the oligosaccharide to the alpha-1,6 position. The polypeptide is 1,4-alpha-glucan branching enzyme GlgB (Shigella boydii serotype 4 (strain Sb227)).